The primary structure comprises 511 residues: MATVQEKAAALNLSALHSPAHRPPGFSVAQKPFGATYVWSSIINTLQTQVEVKKRRHRLKRHNDCFVGSEAVDVIFSHLIQNKYFGDVDIPRAKVVRVCQALMDYKVFEAVPTKVFGKDKKPTFEDSSCSLYRFTTIPNQDSQSGRVNKLYSPARYADALFKSSDIKSASLEDLWENLSLKPANSPHVNISATLSPQVINEVWQEETIGRLLQLVDLPLLDSLLKQQEAVPKVPQPKRQSTIVNSSNYLDRGILKAYSDSQEDEWLSAAIDCLEYLPDQMVVEISRSFPEQPDRTDLVKELLFDAIGRYYSSREPLLNHLSDVHNGIAELLVNGKTEIALEATQLLLKLLDFQNREEFRRLLYFMAVAANPSEFKLQKESDNRMIVKRIFSKAIVDNKNLSKGKTDLLVLFLMDHQKDVFKIPGTLHKIVSVKLMAIQNGRDPNRDAGYIYCQRIEQRDYSNNTEKTTKDELLNLLKTIDEDSKLSAKEKKKLLGQFYKCHPDIFIEHFGD.

A DEP domain is found at 46–136 (LQTQVEVKKR…SSCSLYRFTT (91 aa)).

This sequence belongs to the DEPDC7 family.

In Pongo abelii (Sumatran orangutan), this protein is DEP domain-containing protein 7 (DEPDC7).